A 953-amino-acid chain; its full sequence is UvrABC system protein A (953 aa).

Residue glycine 33–serine 40 participates in ATP binding. ABC transporter domains lie at tryptophan 320 to isoleucine 599 and glycine 619 to lysine 949. Residue glycine 652–serine 659 coordinates ATP. Residues cysteine 752–cysteine 778 form a C4-type zinc finger.

The protein belongs to the ABC transporter superfamily. UvrA family. In terms of assembly, forms a heterotetramer with UvrB during the search for lesions.

It localises to the cytoplasm. Functionally, the UvrABC repair system catalyzes the recognition and processing of DNA lesions. UvrA is an ATPase and a DNA-binding protein. A damage recognition complex composed of 2 UvrA and 2 UvrB subunits scans DNA for abnormalities. When the presence of a lesion has been verified by UvrB, the UvrA molecules dissociate. This is UvrABC system protein A from Rickettsia typhi (strain ATCC VR-144 / Wilmington).